The primary structure comprises 397 residues: Acetate kinase (397 aa).

Mg(2+) is bound at residue Asn7. Residue Lys14 coordinates ATP. Arg91 contacts substrate. The active-site Proton donor/acceptor is Asp147. ATP-binding positions include 207–211 (HLGNG), 282–284 (DFR), and 330–334 (GLGEN). Mg(2+) is bound at residue Glu383.

The protein belongs to the acetokinase family. In terms of assembly, homodimer. It depends on Mg(2+) as a cofactor. Mn(2+) serves as cofactor.

It localises to the cytoplasm. It catalyses the reaction acetate + ATP = acetyl phosphate + ADP. Its pathway is metabolic intermediate biosynthesis; acetyl-CoA biosynthesis; acetyl-CoA from acetate: step 1/2. Its function is as follows. Catalyzes the formation of acetyl phosphate from acetate and ATP. Can also catalyze the reverse reaction. In Moorella thermoacetica (strain ATCC 39073 / JCM 9320), this protein is Acetate kinase.